Reading from the N-terminus, the 51-residue chain is MVYRRRRSRSADGTYTRRRRSSGYRRRPGRPRTYRRSRSATRRSGYRRRRY.

The segment at 1–51 is disordered; that stretch reads MVYRRRRSRSADGTYTRRRRSSGYRRRPGRPRTYRRSRSATRRSGYRRRRY. 2 repeat units span residues 5 to 10 and 17 to 22. The segment at 5–22 is 2 X 6 AA repeats of R-R-R-R-S-S; sequence RRRSRSADGTYTRRRRSS. The segment covering 16-51 has biased composition (basic residues); sequence TRRRRSSGYRRRPGRPRTYRRSRSATRRSGYRRRRY.

Post-translationally, probably phosphorylated in infected cells.

It is found in the virion. Its function is as follows. Thought to be responsible for DNA condensation during packaging of the nucleocapsids. The polypeptide is DNA-binding protein (P6.5) (Orgyia pseudotsugata (Douglas-fir tussock moth)).